The primary structure comprises 173 residues: NADH-quinone oxidoreductase subunit B (173 aa).

Cysteine 46, cysteine 47, cysteine 112, and cysteine 142 together coordinate [4Fe-4S] cluster.

The protein belongs to the complex I 20 kDa subunit family. In terms of assembly, NDH-1 is composed of 14 different subunits. Subunits NuoB, C, D, E, F, and G constitute the peripheral sector of the complex. [4Fe-4S] cluster serves as cofactor.

The protein localises to the cell membrane. It carries out the reaction a quinone + NADH + 5 H(+)(in) = a quinol + NAD(+) + 4 H(+)(out). Functionally, NDH-1 shuttles electrons from NADH, via FMN and iron-sulfur (Fe-S) centers, to quinones in the respiratory chain. The immediate electron acceptor for the enzyme in this species is believed to be a menaquinone. Couples the redox reaction to proton translocation (for every two electrons transferred, four hydrogen ions are translocated across the cytoplasmic membrane), and thus conserves the redox energy in a proton gradient. This is NADH-quinone oxidoreductase subunit B from Desulfitobacterium hafniense (strain DSM 10664 / DCB-2).